Reading from the N-terminus, the 301-residue chain is 4-hydroxybenzoate octaprenyltransferase (301 aa).

Transmembrane regions (helical) follow at residues 34–54 (IGSL…ADGL), 57–77 (LWTL…GCVI), 108–128 (LWVF…LNWL), 152–172 (LPQV…FAAV), 176–196 (VPLL…AYDT), 221–241 (FDLI…VLVG), 245–265 (DLGV…AYEF), and 279–299 (AFLH…VAVA).

It belongs to the UbiA prenyltransferase family. Requires Mg(2+) as cofactor.

It is found in the cell inner membrane. It catalyses the reaction all-trans-octaprenyl diphosphate + 4-hydroxybenzoate = 4-hydroxy-3-(all-trans-octaprenyl)benzoate + diphosphate. It functions in the pathway cofactor biosynthesis; ubiquinone biosynthesis. In terms of biological role, catalyzes the prenylation of para-hydroxybenzoate (PHB) with an all-trans polyprenyl group. Mediates the second step in the final reaction sequence of ubiquinone-8 (UQ-8) biosynthesis, which is the condensation of the polyisoprenoid side chain with PHB, generating the first membrane-bound Q intermediate 3-octaprenyl-4-hydroxybenzoate. The sequence is that of 4-hydroxybenzoate octaprenyltransferase from Xanthomonas euvesicatoria pv. vesicatoria (strain 85-10) (Xanthomonas campestris pv. vesicatoria).